The primary structure comprises 78 residues: Small ribosomal subunit protein uS19m (78 aa).

Belongs to the universal ribosomal protein uS19 family.

It localises to the mitochondrion. The chain is Small ribosomal subunit protein uS19m (RPS19) from Acanthamoeba castellanii (Amoeba).